The primary structure comprises 221 residues: Oxaloacetate tautomerase FAHD1, mitochondrial (221 aa).

Residues 1–24 (MASTKPLSRFWEWGKNIVCVGRNY) constitute a mitochondrion transit peptide. Residue Arg-22 participates in oxalate binding. Ser-37 carries the phosphoserine modification. Mg(2+) contacts are provided by Glu-68, Glu-70, and Asp-99. An N6-acetyllysine modification is found at Lys-110. Residue Lys-112 is modified to N6-succinyllysine. Lys-120 contributes to the oxalate binding site.

It belongs to the FAH family. In terms of assembly, homodimer. It depends on Mg(2+) as a cofactor. Mn(2+) serves as cofactor. As to expression, ubiquitous with higher expression in the liver and the kidney (at protein level).

It is found in the mitochondrion. It localises to the cytoplasm. The protein resides in the cytosol. It catalyses the reaction oxaloacetate = enol-oxaloacetate. It carries out the reaction oxaloacetate + H(+) = pyruvate + CO2. The catalysed reaction is a 3-acylpyruvate + H2O = a carboxylate + pyruvate + H(+). The enzyme catalyses acetylpyruvate + H2O = acetate + pyruvate + H(+). It catalyses the reaction 3-fumarylpyruvate + H2O = fumarate + pyruvate + H(+). Oxaloacetate decarboxylation is potently and competitively inhibited by oxalate. Tautomerase that converts enol-oxaloacetate, a strong inhibitor of succinate dehydrogenase, to the physiological keto form of oxaloacetate. It is thereby required to maximize aerobic respiration efficiency by preventing succinate dehydrogenase inhibition. Also acts as a weak oxaloacetate decarboxylase (ODx), catalyzing the decarboxylation of oxaloacetate (OAA) to pyruvate and CO(2), and as such is likely a regulatory enzyme in the TCA cycle. Also displays acylpyruvase activity, being able to hydrolyze acetylpyruvate and fumarylpyruvate in vitro. The protein is Oxaloacetate tautomerase FAHD1, mitochondrial of Mus musculus (Mouse).